We begin with the raw amino-acid sequence, 218 residues long: Transmembrane gamma-carboxyglutamic acid protein 1 (218 aa).

The propeptide occupies 1–20; sequence MGRVFLTGEKANSVLKRYPR. Residues 20 to 66 form the Gla domain; that stretch reads RANGFFEEIRQGNIERECKEEFCTFEEAREAFENNEKTKEFWSTYTK. Over 21 to 80 the chain is Extracellular; that stretch reads ANGFFEEIRQGNIERECKEEFCTFEEAREAFENNEKTKEFWSTYTKAQQGESNRGSDWFQ. Cys37 and Cys42 form a disulfide bridge. Residues 81 to 101 form a helical membrane-spanning segment; it reads FYLTFPLIFGLFIILLVIFLI. Residues 102 to 218 are Cytoplasmic-facing; sequence WRCFLRNKTR…PMVPVVTTIK (117 aa). The interval 161-195 is disordered; it reads TRLSNCDPPPTYEEATGQVNLQRSETEPHLDPPPE.

Gla residues are produced after subsequent post-translational modifications of glutamate by a vitamin K-dependent gamma-carboxylase.

It is found in the membrane. The polypeptide is Transmembrane gamma-carboxyglutamic acid protein 1 (PRRG1) (Pongo abelii (Sumatran orangutan)).